Here is a 55-residue protein sequence, read N- to C-terminus: ATP synthase F(0) complex subunit 8 (55 aa).

A helical transmembrane segment spans residues 7–24 (SPWFFIMLTTWLTFSLII).

It belongs to the ATPase protein 8 family. As to quaternary structure, component of the ATP synthase complex composed at least of ATP5F1A/subunit alpha, ATP5F1B/subunit beta, ATP5MC1/subunit c (homooctomer), MT-ATP6/subunit a, MT-ATP8/subunit 8, ATP5ME/subunit e, ATP5MF/subunit f, ATP5MG/subunit g, ATP5MK/subunit k, ATP5MJ/subunit j, ATP5F1C/subunit gamma, ATP5F1D/subunit delta, ATP5F1E/subunit epsilon, ATP5PF/subunit F6, ATP5PB/subunit b, ATP5PD/subunit d, ATP5PO/subunit OSCP. ATP synthase complex consists of a soluble F(1) head domain (subunits alpha(3) and beta(3)) - the catalytic core - and a membrane F(0) domain - the membrane proton channel (subunits c, a, 8, e, f, g, k and j). These two domains are linked by a central stalk (subunits gamma, delta, and epsilon) rotating inside the F1 region and a stationary peripheral stalk (subunits F6, b, d, and OSCP).

It localises to the mitochondrion membrane. Subunit 8, of the mitochondrial membrane ATP synthase complex (F(1)F(0) ATP synthase or Complex V) that produces ATP from ADP in the presence of a proton gradient across the membrane which is generated by electron transport complexes of the respiratory chain. ATP synthase complex consist of a soluble F(1) head domain - the catalytic core - and a membrane F(1) domain - the membrane proton channel. These two domains are linked by a central stalk rotating inside the F(1) region and a stationary peripheral stalk. During catalysis, ATP synthesis in the catalytic domain of F(1) is coupled via a rotary mechanism of the central stalk subunits to proton translocation. In vivo, can only synthesize ATP although its ATP hydrolase activity can be activated artificially in vitro. Part of the complex F(0) domain. The protein is ATP synthase F(0) complex subunit 8 of Columbina passerina (Common ground-dove).